The primary structure comprises 264 residues: tRNA pseudouridine synthase A (264 aa).

Asp-52 (nucleophile) is an active-site residue. Tyr-110 serves as a coordination point for substrate.

The protein belongs to the tRNA pseudouridine synthase TruA family. In terms of assembly, homodimer.

It carries out the reaction uridine(38/39/40) in tRNA = pseudouridine(38/39/40) in tRNA. Formation of pseudouridine at positions 38, 39 and 40 in the anticodon stem and loop of transfer RNAs. The polypeptide is tRNA pseudouridine synthase A (Wigglesworthia glossinidia brevipalpis).